The chain runs to 1122 residues: Phytochrome A (1122 aa).

Residues Met1 to Glu11 are compositionally biased toward polar residues. Residues Met1–Arg21 form a disordered region. Residues Ser218–Val402 enclose the GAF domain. Cys323 lines the phytochromobilin pocket. One can recognise a PAS 1 domain in the interval Val618–Thr688. Residues Phe695–Arg747 enclose the PAC domain. One can recognise a PAS 2 domain in the interval Ile748–Gly822. One can recognise a Histidine kinase domain in the interval Tyr902–Ala1119.

Belongs to the phytochrome family. As to quaternary structure, homodimer. Interacts with NDPK2 and PKS4. Stabilized by interactions with PAPP5 and FYPP3 which are enhanced in the phosphorylated Pfr form. Interacts with COP1/SPA1 complex. Binds, via its photosensory domain, to PTAC12/HMR when photoactivated; this interaction stimulates its localization to photobodies. Interacts with FHY1, FHL and FHY3, especially upon far-red (FR) light illumination; when underphosphorylated. Forms PHYA/FHY1/HFR1 complex. Binds to PIF3/PAP3. In terms of processing, phosphorylated. Post-translationally, contains one covalently linked phytochromobilin chromophore. Expressed in fruits, flowers, leaves, stems, seedlings and roots.

The protein resides in the cytoplasm. The protein localises to the nucleus. Its subcellular location is the nucleoplasm. It is found in the nucleus speckle. Its function is as follows. Regulatory photoreceptor which exists in two forms that are reversibly interconvertible by light: the Pr form that absorbs maximally in the red region of the spectrum and the Pfr form that absorbs maximally in the far-red region. Photoconversion of Pr to Pfr induces an array of morphogenetic responses, whereas reconversion of Pfr to Pr cancels the induction of those responses. Pfr controls the expression of a number of nuclear genes including those encoding the small subunit of ribulose-bisphosphate carboxylase, chlorophyll A/B binding protein, protochlorophyllide reductase, rRNA, etc. It also controls the expression of its own gene(s) in a negative feedback fashion. Involved in the flowering time regulation. Can phosphorylate FHY1 and, possibly, FHL, in red light conditions; this inactivates their co-shuttling to the nucleus. Regulates phototropic responses both in the nucleus (e.g. hypocotyl elongation and cotyledon opening under high-irradiance conditions and seed germination under very-low-fluence conditions) and in the cytoplasm (e.g. negative gravitropism in blue light and red-enhanced phototropism). Promotes seed germination, suppression of hypocotyl elongation, and randomization of hypocotyl growth orientation in far-red light; these responses to far-red light are repressed by UNE10/PIF8. Stabilizes UNE10/PIF8 but sequesters PIF3/PAP3 from its target genes promoters in far-red light. The sequence is that of Phytochrome A from Arabidopsis thaliana (Mouse-ear cress).